The chain runs to 185 residues: Ribosome-recycling factor (185 aa).

The protein belongs to the RRF family.

It localises to the cytoplasm. Responsible for the release of ribosomes from messenger RNA at the termination of protein biosynthesis. May increase the efficiency of translation by recycling ribosomes from one round of translation to another. This chain is Ribosome-recycling factor, found in Streptococcus gordonii (strain Challis / ATCC 35105 / BCRC 15272 / CH1 / DL1 / V288).